A 304-amino-acid chain; its full sequence is Small ribosomal subunit biogenesis GTPase RsgA (304 aa).

The 160-residue stretch at 78-237 (VSFLTRPPVA…VADTPGFNRP (160 aa)) folds into the CP-type G domain. GTP-binding positions include 127–130 (TKTD) and 179–187 (GPSGVGKSS). Positions 262, 267, 269, and 275 each coordinate Zn(2+).

This sequence belongs to the TRAFAC class YlqF/YawG GTPase family. RsgA subfamily. As to quaternary structure, monomer. Associates with 30S ribosomal subunit, binds 16S rRNA. It depends on Zn(2+) as a cofactor.

The protein resides in the cytoplasm. In terms of biological role, one of several proteins that assist in the late maturation steps of the functional core of the 30S ribosomal subunit. Helps release RbfA from mature subunits. May play a role in the assembly of ribosomal proteins into the subunit. Circularly permuted GTPase that catalyzes slow GTP hydrolysis, GTPase activity is stimulated by the 30S ribosomal subunit. This is Small ribosomal subunit biogenesis GTPase RsgA from Synechococcus sp. (strain CC9311).